The chain runs to 366 residues: tRNA/tmRNA (uracil-C(5))-methyltransferase (366 aa).

Residues Gln190, Tyr218, Asn223, Glu239, and Asp299 each coordinate S-adenosyl-L-methionine. Cys324 serves as the catalytic Nucleophile. Residue Glu358 is the Proton acceptor of the active site.

Belongs to the class I-like SAM-binding methyltransferase superfamily. RNA M5U methyltransferase family. TrmA subfamily.

The catalysed reaction is uridine(54) in tRNA + S-adenosyl-L-methionine = 5-methyluridine(54) in tRNA + S-adenosyl-L-homocysteine + H(+). It catalyses the reaction uridine(341) in tmRNA + S-adenosyl-L-methionine = 5-methyluridine(341) in tmRNA + S-adenosyl-L-homocysteine + H(+). Dual-specificity methyltransferase that catalyzes the formation of 5-methyluridine at position 54 (m5U54) in all tRNAs, and that of position 341 (m5U341) in tmRNA (transfer-mRNA). The sequence is that of tRNA/tmRNA (uracil-C(5))-methyltransferase from Salmonella newport (strain SL254).